A 407-amino-acid polypeptide reads, in one-letter code: Argininosuccinate synthase (407 aa).

Residues 16–24 (AYSGGLDTS) and Ala44 each bind ATP. Positions 96 and 101 each coordinate L-citrulline. An ATP-binding site is contributed by Gly126. Residues Thr128, Asn132, and Asp133 each contribute to the L-aspartate site. Asn132 is an L-citrulline binding site. Positions 136, 185, 194, 270, and 282 each coordinate L-citrulline.

This sequence belongs to the argininosuccinate synthase family. Type 1 subfamily. As to quaternary structure, homotetramer.

The protein localises to the cytoplasm. The catalysed reaction is L-citrulline + L-aspartate + ATP = 2-(N(omega)-L-arginino)succinate + AMP + diphosphate + H(+). The protein operates within amino-acid biosynthesis; L-arginine biosynthesis; L-arginine from L-ornithine and carbamoyl phosphate: step 2/3. The sequence is that of Argininosuccinate synthase from Shewanella sediminis (strain HAW-EB3).